A 579-amino-acid chain; its full sequence is Adenine deaminase (579 aa).

This sequence belongs to the metallo-dependent hydrolases superfamily. Adenine deaminase family. The cofactor is Mn(2+).

It carries out the reaction adenine + H2O + H(+) = hypoxanthine + NH4(+). This Listeria welshimeri serovar 6b (strain ATCC 35897 / DSM 20650 / CCUG 15529 / CIP 8149 / NCTC 11857 / SLCC 5334 / V8) protein is Adenine deaminase.